Consider the following 437-residue polypeptide: C-terminal-binding protein 2 (437 aa).

NAD(+) contacts are provided by residues Ser-103, 183–188 (IGLGRI), Asp-207, 240–246 (CNLNEHN), 267–269 (TAR), and Asp-293. The active site involves Arg-269. Glu-298 is an active-site residue. The active-site Proton donor is His-318. 318-321 (HTAW) lines the NAD(+) pocket. The segment at 410–437 (PLIPSVSHTPSPGQTTKPDPDREIPTDQ) is disordered. The span at 415–426 (VSHTPSPGQTTK) shows a compositional bias: polar residues. Positions 427 to 437 (PDPDREIPTDQ) are enriched in basic and acidic residues.

This sequence belongs to the D-isomer specific 2-hydroxyacid dehydrogenase family. As to quaternary structure, interacts with the C-terminus of tcf7l1-a via the consensus motifs P-X-[DNS]-L-[STVA].

Its subcellular location is the nucleus. Its function is as follows. Corepressor targeting diverse transcription regulators. The protein is C-terminal-binding protein 2 (ctbp2) of Xenopus laevis (African clawed frog).